Consider the following 176-residue polypeptide: Cytochrome b (176 aa).

Transmembrane regions (helical) follow at residues 33–53 (FGSLLGVCLTVQILTGLFLAM), 77–98 (WLLRYLHANGASMFFICLYLHV), and 113–133 (WNVGVILLFAVMATAFMGYVL). Heme b contacts are provided by H83 and H97.

This sequence belongs to the cytochrome b family. As to quaternary structure, the cytochrome bc1 complex contains 11 subunits: 3 respiratory subunits (MT-CYB, CYC1 and UQCRFS1), 2 core proteins (UQCRC1 and UQCRC2) and 6 low-molecular weight proteins (UQCRH/QCR6, UQCRB/QCR7, UQCRQ/QCR8, UQCR10/QCR9, UQCR11/QCR10 and a cleavage product of UQCRFS1). This cytochrome bc1 complex then forms a dimer. It depends on heme b as a cofactor.

It is found in the mitochondrion inner membrane. Functionally, component of the ubiquinol-cytochrome c reductase complex (complex III or cytochrome b-c1 complex) that is part of the mitochondrial respiratory chain. The b-c1 complex mediates electron transfer from ubiquinol to cytochrome c. Contributes to the generation of a proton gradient across the mitochondrial membrane that is then used for ATP synthesis. This is Cytochrome b (MT-CYB) from Mormopterus kalinowskii (Kalinowski's mastiff bat).